A 407-amino-acid chain; its full sequence is L-amino-acid oxidase (407 aa).

Cys-10 and Cys-94 are joined by a disulfide. N-linked (GlcNAc...) asparagine glycosylation is present at Asn-93. His-144 contacts substrate. Val-182 contributes to the FAD binding site. A disulfide bridge connects residues Cys-252 and Cys-333. Residue Asn-282 is glycosylated (N-linked (GlcNAc...) asparagine). Tyr-293 contributes to the substrate binding site. FAD-binding positions include Glu-378 and 385 to 390; that span reads GWIDST. 385 to 386 contacts substrate; the sequence is GW.

Belongs to the flavin monoamine oxidase family. FIG1 subfamily. As to quaternary structure, homodimer; non-covalently linked. FAD is required as a cofactor. As to expression, expressed by the venom gland.

Its subcellular location is the secreted. The catalysed reaction is an L-alpha-amino acid + O2 + H2O = a 2-oxocarboxylate + H2O2 + NH4(+). The enzyme catalyses L-leucine + O2 + H2O = 4-methyl-2-oxopentanoate + H2O2 + NH4(+). It carries out the reaction L-phenylalanine + O2 + H2O = 3-phenylpyruvate + H2O2 + NH4(+). It catalyses the reaction L-isoleucine + O2 + H2O = (S)-3-methyl-2-oxopentanoate + H2O2 + NH4(+). The catalysed reaction is L-aspartate + O2 + H2O = oxaloacetate + H2O2 + NH4(+). The enzyme catalyses L-lysine + O2 + H2O = 6-amino-2-oxohexanoate + H2O2 + NH4(+). It carries out the reaction L-glutamate + O2 + H2O = H2O2 + 2-oxoglutarate + NH4(+). In terms of biological role, catalyzes an oxidative deamination of predominantly hydrophobic and aromatic L-amino acids, thus producing hydrogen peroxide that may contribute to the diverse toxic effects of this enzyme. Is highly active on L-Leu followed by L-Phe and L-Ile, moderately active on L-Asp, L-Glu, and L-Lys, and not active on L-Pro, L-Asn, L-Gly, L-Ser and L-Cys. Exhibits diverse biological activities such as antibacterial activity (Minimal inhibitory concentrations (MIC) are 9.0 ug/ml against S.aureus, 144.0 ug/ml against P.aeruginosa and 288.0 ug/ml against E.coli) and inhibition of ADP- and TMVA-induced platelet aggregation. Effects of snake L-amino oxidases on platelets are controversial, since they either induce aggregation or inhibit agonist-induced aggregation. These different effects are probably due to different experimental conditions. Unlike other snake venom L-amino acid oxidases, does not induce hemorrhage. This protein may also induce hemolysis, edema, apoptosis and have antiparasitic activities. In Daboia siamensis (Eastern Russel's viper), this protein is L-amino-acid oxidase.